A 549-amino-acid chain; its full sequence is Neutral amino acid transporter 9 (549 aa).

Residues Met1 to Arg27 form a disordered region. The Cytoplasmic portion of the chain corresponds to Met1–Ser107. Residues Ile108 to Trp128 form a helical membrane-spanning segment. The interval Thr117–Ser122 is important for arginine binding and amino acid transport. Residue Ser122 participates in arginine binding. Residues Gly129 to Gly134 are Lumenal-facing. The helical transmembrane segment at Phe135–Arg155 threads the bilayer. Residues Val156–Lys186 lie on the Cytoplasmic side of the membrane. The helical transmembrane segment at Trp187–Phe213 threads the bilayer. At Asn214–His271 the chain is on the lumenal side. N-linked (GlcNAc...) asparagine glycans are attached at residues Asn227, Asn235, Asn252, and Asn263. A disulfide bridge links Cys242 with Cys412. The helical transmembrane segment at Trp272 to Leu288 threads the bilayer. The Cytoplasmic segment spans residues Pro289 to Ser297. The helical transmembrane segment at Phe298–Ile322 threads the bilayer. Residues Gln323–Arg344 are Lumenal-facing. The helical transmembrane segment at Thr345–Ile365 threads the bilayer. The Cytoplasmic portion of the chain corresponds to Thr366–Ser382. The chain crosses the membrane as a helical span at residues Leu383–Phe403. Topologically, residues Pro404–Asp425 are lumenal. Residues Ile426–Leu446 traverse the membrane as a helical segment. The CARC motif signature appears at Arg432–Val442. Positions Leu445–Arg451 match the CRAC motif motif. At Gly447 to Leu467 the chain is on the cytoplasmic side. The chain crosses the membrane as a helical span at residues His468–Pro488. The Lumenal portion of the chain corresponds to Asn489–Arg495. The helical transmembrane segment at Tyr496–Val516 threads the bilayer. The Cytoplasmic segment spans residues Ser517–Ser528. A helical transmembrane segment spans residues Thr529 to Met549.

It belongs to the amino acid/polyamine transporter 2 family. SLC38A9 subfamily. Associated component of the Ragulator complex. Associated component of the Rag GTPases heterodimers (RRAGA and RRAGC). Post-translationally, glycosylated.

The protein resides in the lysosome membrane. The protein localises to the late endosome membrane. The catalysed reaction is L-leucine(in) = L-leucine(out). It catalyses the reaction L-tyrosine(in) = L-tyrosine(out). It carries out the reaction L-glutamine(out) = L-glutamine(in). The enzyme catalyses L-asparagine(out) = L-asparagine(in). Amino acid transport activity is increased by sodium. Transport of L-glutamine, leucine and tyrosine is increased by arginine binding. In terms of biological role, lysosomal amino acid transporter involved in the activation of mTORC1 in response to amino acid levels. Probably acts as an amino acid sensor of the Rag GTPases and Ragulator complexes, 2 complexes involved in amino acid sensing and activation of mTORC1, a signaling complex promoting cell growth in response to growth factors, energy levels, and amino acids. Following activation by amino acids, the Ragulator and Rag GTPases function as a scaffold recruiting mTORC1 to lysosomes where it is in turn activated. SLC38A9 mediates transport of amino acids with low capacity and specificity with a slight preference for polar amino acids. Acts as an arginine sensor. Following activation by arginine binding, mediates transport of L-glutamine, leucine and tyrosine with high efficiency, and is required for the efficient utilization of these amino acids after lysosomal protein degradation. However, the transport mechanism is not well defined and the role of sodium is not clear. Guanine exchange factor (GEF) that, upon arginine binding, stimulates GDP release from RRAGA and therefore activates the Rag GTPase heterodimer and the mTORC1 pathway in response to nutrient sufficiency. This chain is Neutral amino acid transporter 9, found in Danio rerio (Zebrafish).